A 271-amino-acid polypeptide reads, in one-letter code: Adenosylcobinamide-GDP ribazoletransferase (271 aa).

7 helical membrane passes run 4 to 24 (FLLA…GMSM), 35 to 55 (YLQT…AYLT), 58 to 78 (FLPS…ITGL), 108 to 128 (SLGI…YASI), 135 to 155 (VLFF…IAEI), 192 to 212 (FVLG…IGYI), and 246 to 266 (IIVL…YGGL).

It belongs to the CobS family. Mg(2+) serves as cofactor.

It localises to the cell membrane. The catalysed reaction is alpha-ribazole + adenosylcob(III)inamide-GDP = adenosylcob(III)alamin + GMP + H(+). It carries out the reaction alpha-ribazole 5'-phosphate + adenosylcob(III)inamide-GDP = adenosylcob(III)alamin 5'-phosphate + GMP + H(+). It functions in the pathway cofactor biosynthesis; adenosylcobalamin biosynthesis; adenosylcobalamin from cob(II)yrinate a,c-diamide: step 7/7. In terms of biological role, joins adenosylcobinamide-GDP and alpha-ribazole to generate adenosylcobalamin (Ado-cobalamin). Also synthesizes adenosylcobalamin 5'-phosphate from adenosylcobinamide-GDP and alpha-ribazole 5'-phosphate. In Methanococcoides burtonii (strain DSM 6242 / NBRC 107633 / OCM 468 / ACE-M), this protein is Adenosylcobinamide-GDP ribazoletransferase.